The sequence spans 319 residues: tRNA uridine(34) hydroxylase (319 aa).

Residues 124–218 form the Rhodanese domain; the sequence is LDEDTVILDA…YGKNEETKGE (95 aa). Residue Cys178 is the Cysteine persulfide intermediate of the active site.

Belongs to the TrhO family.

The catalysed reaction is uridine(34) in tRNA + AH2 + O2 = 5-hydroxyuridine(34) in tRNA + A + H2O. Catalyzes oxygen-dependent 5-hydroxyuridine (ho5U) modification at position 34 in tRNAs. This Listeria monocytogenes serotype 4b (strain CLIP80459) protein is tRNA uridine(34) hydroxylase.